The sequence spans 1229 residues: Nuclear envelope pore membrane protein POM 121C (1229 aa).

A compositionally biased stretch (low complexity) spans 1 to 10 (MSPAAAAAGA). Residues 1–24 (MSPAAAAAGAGERRRPIASVRDGR) form a disordered region. The interval 1-40 (MSPAAAAAGAGERRRPIASVRDGRGRGCGGPAGAALLGLS) is cisternal side. Residues 1–398 (MSPAAAAAGA…AITSSYSSTR (398 aa)) are required for targeting to the nucleus and nuclear pore complex. Positions 11-24 (GERRRPIASVRDGR) are enriched in basic and acidic residues. A helical membrane pass occupies residues 41 to 61 (LVGLLLYLVPAAAALAWLAVG). Residues 62–1229 (TTAAWWGLSR…QARRQHTRKK (1168 aa)) form a pore side region. Serine 81 carries the phosphoserine modification. Disordered regions lie at residues 90-200 (RTLF…LPDR), 296-507 (KKKK…LGYS), 579-747 (KKMQ…TAPT), 936-966 (PLPS…ALTP), and 1202-1229 (PSFS…TRKK). Residues 155–166 (ARPAPRSTPPSQ) show a composition bias toward pro residues. Residues 176–189 (PSLPTPLLRPSGRP) show a composition bias toward low complexity. A phosphoserine mark is found at serine 322, serine 328, serine 348, serine 370, and serine 373. Polar residues predominate over residues 374-400 (LTGAYTSGIPSSSRNAITSSYSSTRGI). The segment covering 409–422 (PSSSPFSSPASSRS) has biased composition (low complexity). Composition is skewed to basic and acidic residues over residues 427–439 (RPAK…ELCH) and 449–463 (ADKE…DTTP). Polar residues predominate over residues 468-479 (NSNSQSTPGSSG). The segment covering 612 to 629 (PPLGLSQSGPPGLLPSPS) has biased composition (low complexity). Residues 660-673 (QAETATKPQATSAP) are compositionally biased toward polar residues. 2 stretches are compositionally biased toward low complexity: residues 689–703 (SPSS…SASP) and 726–747 (SVSA…TAPT). Residues 1219–1229 (LQARRQHTRKK) are compositionally biased toward basic residues.

The protein belongs to the POM121 family.

The protein localises to the nucleus. It is found in the nuclear pore complex. The protein resides in the nucleus membrane. Its subcellular location is the endoplasmic reticulum membrane. Its function is as follows. Essential component of the nuclear pore complex (NPC). The repeat-containing domain may be involved in anchoring components of the pore complex to the pore membrane. When overexpressed in cells induces the formation of cytoplasmic annulate lamellae (AL). This Homo sapiens (Human) protein is Nuclear envelope pore membrane protein POM 121C (POM121C).